The chain runs to 107 residues: Apolipoprotein E (107 aa).

Tandem repeats lie at residues 11–32, 33–54, 55–76, 77–98, and 99–107. Residues 11–107 form a 5 X 22 AA approximate tandem repeats region; the sequence is ALMDETMKEL…LRDVDDLQKR (97 aa). Met-74 bears the Methionine sulfoxide mark. Position 78 is a phosphoserine (Ser-78). The tract at residues 89-99 is LDL and other lipoprotein receptors binding; sequence HLRKLRKRLLR. Heparin is bound at residue 93–96; it reads LRKR.

This sequence belongs to the apolipoprotein A1/A4/E family. In terms of assembly, homotetramer. May interact with ABCA1; functionally associated with ABCA1 in the biogenesis of HDLs. May interact with APP/A4 amyloid-beta peptide; the interaction is extremely stable in vitro but its physiological significance is unclear. May interact with MAPT. May interact with MAP2. In the cerebrospinal fluid, interacts with secreted SORL1. Interacts with PMEL; this allows the loading of PMEL luminal fragment on ILVs to induce fibril nucleation. Post-translationally, APOE exists as multiple glycosylated and sialylated glycoforms within cells and in plasma. The extent of glycosylation and sialylation are tissue and context specific. Glycated in plasma VLDL. In terms of processing, phosphorylated by FAM20C in the extracellular medium.

The protein localises to the secreted. It localises to the extracellular space. The protein resides in the extracellular matrix. It is found in the extracellular vesicle. Its subcellular location is the endosome. The protein localises to the multivesicular body. Functionally, APOE is an apolipoprotein, a protein associating with lipid particles, that mainly functions in lipoprotein-mediated lipid transport between organs via the plasma and interstitial fluids. APOE is a core component of plasma lipoproteins and is involved in their production, conversion and clearance. Apolipoproteins are amphipathic molecules that interact both with lipids of the lipoprotein particle core and the aqueous environment of the plasma. As such, APOE associates with chylomicrons, chylomicron remnants, very low density lipoproteins (VLDL) and intermediate density lipoproteins (IDL) but shows a preferential binding to high-density lipoproteins (HDL). It also binds a wide range of cellular receptors including the LDL receptor/LDLR, the LDL receptor-related proteins LRP1, LRP2 and LRP8 and the very low-density lipoprotein receptor/VLDLR that mediate the cellular uptake of the APOE-containing lipoprotein particles. Finally, APOE also has a heparin-binding activity and binds heparan-sulfate proteoglycans on the surface of cells, a property that supports the capture and the receptor-mediated uptake of APOE-containing lipoproteins by cells. A main function of APOE is to mediate lipoprotein clearance through the uptake of chylomicrons, VLDLs, and HDLs by hepatocytes. APOE is also involved in the biosynthesis by the liver of VLDLs as well as their uptake by peripheral tissues ensuring the delivery of triglycerides and energy storage in muscle, heart and adipose tissues. By participating in the lipoprotein-mediated distribution of lipids among tissues, APOE plays a critical role in plasma and tissues lipid homeostasis. APOE is also involved in two steps of reverse cholesterol transport, the HDLs-mediated transport of cholesterol from peripheral tissues to the liver, and thereby plays an important role in cholesterol homeostasis. First, it is functionally associated with ABCA1 in the biogenesis of HDLs in tissues. Second, it is enriched in circulating HDLs and mediates their uptake by hepatocytes. APOE also plays an important role in lipid transport in the central nervous system, regulating neuron survival and sprouting. The sequence is that of Apolipoprotein E (APOE) from Saimiri sciureus (Common squirrel monkey).